The chain runs to 118 residues: Protein yippee-like 1 (118 aa).

In terms of domain architecture, Yippee spans 19–116 (RTYSCIHCRA…IELAHMIKDN (98 aa)). Positions 23, 26, 79, and 82 each coordinate Zn(2+). Residues 99 to 104 (KYKEGK) carry the Nuclear localization signal motif.

Belongs to the yippee family.

The protein resides in the nucleus. Functionally, may play a role in epithelioid conversion of fibroblasts. This chain is Protein yippee-like 1 (Ypel1), found in Mus musculus (Mouse).